We begin with the raw amino-acid sequence, 141 residues long: Small ribosomal subunit protein uS12 (141 aa).

This sequence belongs to the universal ribosomal protein uS12 family. Part of the 30S ribosomal subunit.

Functionally, with S4 and S5 plays an important role in translational accuracy. Located at the interface of the 30S and 50S subunits. The protein is Small ribosomal subunit protein uS12 of Methanosphaera stadtmanae (strain ATCC 43021 / DSM 3091 / JCM 11832 / MCB-3).